The following is a 367-amino-acid chain: Phosphoribosylaminoimidazole-succinocarboxamide synthase (367 aa).

This sequence belongs to the SAICAR synthetase family.

The catalysed reaction is 5-amino-1-(5-phospho-D-ribosyl)imidazole-4-carboxylate + L-aspartate + ATP = (2S)-2-[5-amino-1-(5-phospho-beta-D-ribosyl)imidazole-4-carboxamido]succinate + ADP + phosphate + 2 H(+). The protein operates within purine metabolism; IMP biosynthesis via de novo pathway; 5-amino-1-(5-phospho-D-ribosyl)imidazole-4-carboxamide from 5-amino-1-(5-phospho-D-ribosyl)imidazole-4-carboxylate: step 1/2. This is Phosphoribosylaminoimidazole-succinocarboxamide synthase from Vibrio parahaemolyticus serotype O3:K6 (strain RIMD 2210633).